The sequence spans 359 residues: Peptide chain release factor 1 (359 aa).

Glutamine 235 is subject to N5-methylglutamine. The segment at 283-309 is disordered; sequence QKAESERSQARRSQVGSGDRSERIRTY.

It belongs to the prokaryotic/mitochondrial release factor family. In terms of processing, methylated by PrmC. Methylation increases the termination efficiency of RF1.

The protein resides in the cytoplasm. Functionally, peptide chain release factor 1 directs the termination of translation in response to the peptide chain termination codons UAG and UAA. This chain is Peptide chain release factor 1, found in Brucella abortus (strain S19).